The sequence spans 338 residues: Heat-inducible transcription repressor HrcA (338 aa).

The protein belongs to the HrcA family.

Its function is as follows. Negative regulator of class I heat shock genes (grpE-dnaK-dnaJ and groELS operons). Prevents heat-shock induction of these operons. In Streptomyces albus G, this protein is Heat-inducible transcription repressor HrcA.